The following is a 434-amino-acid chain: 23S rRNA (uracil(1939)-C(5))-methyltransferase RlmD (434 aa).

Residues 10–68 (RVTTRQIITVTVNDLDPFGQGVARHQGKALFVSGVLPHEQAEVVLVEDKKQYARAEVKR) enclose the TRAM domain. Residues C81, C87, C90, and C162 each coordinate [4Fe-4S] cluster. Q265, F294, N299, E315, N342, and D363 together coordinate S-adenosyl-L-methionine. C389 (nucleophile) is an active-site residue.

This sequence belongs to the class I-like SAM-binding methyltransferase superfamily. RNA M5U methyltransferase family. RlmD subfamily.

The catalysed reaction is uridine(1939) in 23S rRNA + S-adenosyl-L-methionine = 5-methyluridine(1939) in 23S rRNA + S-adenosyl-L-homocysteine + H(+). Catalyzes the formation of 5-methyl-uridine at position 1939 (m5U1939) in 23S rRNA. This Klebsiella pneumoniae subsp. pneumoniae (strain ATCC 700721 / MGH 78578) protein is 23S rRNA (uracil(1939)-C(5))-methyltransferase RlmD.